A 101-amino-acid chain; its full sequence is UPF0473 protein MGAS10750_Spy1887 (101 aa).

Belongs to the UPF0473 family.

In Streptococcus pyogenes serotype M4 (strain MGAS10750), this protein is UPF0473 protein MGAS10750_Spy1887.